The primary structure comprises 343 residues: Heat-inducible transcription repressor HrcA (343 aa).

Belongs to the HrcA family.

Functionally, negative regulator of class I heat shock genes (grpE-dnaK-dnaJ and groELS operons). Prevents heat-shock induction of these operons. The chain is Heat-inducible transcription repressor HrcA from Mycoplasma genitalium (strain ATCC 33530 / DSM 19775 / NCTC 10195 / G37) (Mycoplasmoides genitalium).